The following is a 3195-amino-acid chain: Large tegument protein deneddylase (3195 aa).

The 233-residue stretch at 10-242 (VAAASRSQFD…VEVISAALRA (233 aa)) folds into the Peptidase C76 domain. Catalysis depends on residues C30, D173, and H175. 4 disordered regions span residues 287–374 (RGTA…GALA), 2407–2776 (NPAH…DSNY), 2829–3068 (AGVG…AALD), and 3128–3147 (ASDLDDHQSDQPRESLAPLD). Basic residues predominate over residues 338–347 (KVKKPNKGKK). Basic and acidic residues predominate over residues 2470–2482 (KIERASGKNRKTE). Low complexity predominate over residues 2491 to 2503 (AARGRAAAPPTET). Composition is skewed to basic and acidic residues over residues 2504–2527 (KTTEKRQKCPPRESPLSRDERAPH) and 2538–2562 (RPPRGDSDDDRHKHETPHGVSDKAA). Composition is skewed to basic residues over residues 2588-2615 (PKTKPRRTSSGLRRKHQASASVHKHRTH) and 2636-2648 (GRQRRSTLGGKKR). Composition is skewed to basic and acidic residues over residues 2649-2672 (SGTDRTAEFLKKATCVDKLEKFSR) and 2687-2696 (ACDRLGERGN). Over residues 2701 to 2712 (PRAPASSPPPPG) the composition is skewed to pro residues. The segment covering 2714-2723 (QADHGIDQRE) has biased composition (basic and acidic residues). 2 stretches are compositionally biased toward acidic residues: residues 2748-2768 (DDGDPAEEEDARDVEEGEEDV) and 2835-2844 (WSEEDEDAPA). The span at 2850–2864 (STNVEVATHGYTSDD) shows a compositional bias: polar residues. Residues 2869–2878 (DESKRARATR) are compositionally biased toward basic and acidic residues. The span at 2887-2903 (PASPLAPSTPSSLPTPA) shows a compositional bias: low complexity. Positions 2959 to 2981 (DDARKKQENSSHERKDDGVRWEI) are enriched in basic and acidic residues. The span at 2982-2994 (DLDSDQGDYSDAS) shows a compositional bias: acidic residues. Composition is skewed to basic and acidic residues over residues 2995 to 3021 (DDCKIPDGPRVAPEKDIKNKQLEKSES), 3050 to 3062 (SDDKAGNRKDPKL), and 3131 to 3140 (LDDHQSDQPR).

Belongs to the herpesviridae large tegument protein family. Interacts with host CUL1 and CUL4A; these interactions inhibit the E3 ligase activity of cullins. Interacts with inner tegument protein. Interacts with capsid vertex specific component CVC2. Interacts with the major capsid protein/MCP.

The protein resides in the virion tegument. Its subcellular location is the host cytoplasm. It is found in the host nucleus. The catalysed reaction is Thiol-dependent hydrolysis of ester, thioester, amide, peptide and isopeptide bonds formed by the C-terminal Gly of ubiquitin (a 76-residue protein attached to proteins as an intracellular targeting signal).. In terms of biological role, large tegument protein that plays multiple roles in the viral cycle. During viral entry, remains associated with the capsid while most of the tegument is detached and participates in the capsid transport toward the host nucleus. Plays a role in the routing of the capsid at the nuclear pore complex and subsequent uncoating. Within the host nucleus, acts as a deneddylase and promotes the degradation of nuclear CRLs (cullin-RING ubiquitin ligases) and thereby stabilizes nuclear CRL substrates, while cytoplasmic CRLs remain unaffected. These modifications prevent host cell cycle S-phase progression and create a favorable environment allowing efficient viral genome replication. Participates later in the secondary envelopment of capsids. Indeed, plays a linker role for the association of the outer viral tegument to the capsids together with the inner tegument protein. This chain is Large tegument protein deneddylase (UL36), found in Amazona oratrix (yellow-headed parrot).